A 165-amino-acid chain; its full sequence is Large ribosomal subunit protein uL10 (165 aa).

The protein belongs to the universal ribosomal protein uL10 family. Part of the ribosomal stalk of the 50S ribosomal subunit. The N-terminus interacts with L11 and the large rRNA to form the base of the stalk. The C-terminus forms an elongated spine to which L12 dimers bind in a sequential fashion forming a multimeric L10(L12)X complex.

In terms of biological role, forms part of the ribosomal stalk, playing a central role in the interaction of the ribosome with GTP-bound translation factors. This chain is Large ribosomal subunit protein uL10, found in Cronobacter sakazakii (strain ATCC BAA-894) (Enterobacter sakazakii).